We begin with the raw amino-acid sequence, 473 residues long: Spliceosome-associated protein CWC27 homolog (473 aa).

Serine 2 is subject to N-acetylserine. Residues 11-166 form the PPIase cyclophilin-type domain; the sequence is TNGKVLLKTT…NSHKIRSCEV (156 aa). The span at 178–193 shows a compositional bias: basic and acidic residues; it reads EIKKPKKEKPEEEVKK. 3 disordered regions span residues 178–197, 203–383, and 401–473; these read EIKK…LKPK, SLLS…TSRE, and IAET…KERR. A coiled-coil region spans residues 206 to 230; the sequence is SFGEEAEEEEEEVNRVSQSMKGKSK. Basic and acidic residues predominate over residues 231–241; the sequence is SSHDLLKDDPH. The Cell attachment site signature appears at 252-254; that stretch reads RGD. Residues 256-266 are compositionally biased toward acidic residues; sequence AEDSDDDGEYE. Basic and acidic residues-rich tracts occupy residues 267-348 and 360-372; these read GAEH…KRSE and EYRR…EALR. Positions 311-378 form a coiled coil; the sequence is VSRSEELRKE…EALRKQQAKT (68 aa). Phosphoserine is present on serine 347. Residues 405–419 show a composition bias toward acidic residues; the sequence is PENDISETEVEDDEG. 2 stretches are compositionally biased toward basic and acidic residues: residues 426-438 and 458-473; these read QFED…KDAS and RREE…KERR.

Belongs to the cyclophilin-type PPIase family. In terms of assembly, part of the activated spliceosome B/catalytic step 1 spliceosome, one of the forms of the spliceosome which has a well-formed active site but still cannot catalyze the branching reaction and is composed at least of 52 proteins, the U2, U5 and U6 snRNAs and the pre-mRNA. Recruited during early steps of activated spliceosome B maturation, it is probably one of the first proteins released from this complex as he matures to the spliceosome C complex. Component of the minor spliceosome, which splices U12-type introns.

The protein localises to the nucleus. Its function is as follows. As part of the spliceosome, plays a role in pre-mRNA splicing. Probable inactive PPIase with no peptidyl-prolyl cis-trans isomerase activity. As a component of the minor spliceosome, involved in the splicing of U12-type introns in pre-mRNAs. This chain is Spliceosome-associated protein CWC27 homolog, found in Bos taurus (Bovine).